We begin with the raw amino-acid sequence, 396 residues long: Obg-like ATPase 1 (396 aa).

An OBG-type G domain is found at 23–283 (LKIGIVGLPN…LSAEERQKYL (261 aa)). ATP is bound at residue 32-37 (NVGKST). The Mg(2+) site is built by S36 and T56. L231 contacts ATP. A Nuclear export signal motif is present at residues 267-274 (LELKLQEL). K294 carries the post-translational modification N6-acetyllysine. In terms of domain architecture, TGS spans 304–387 (QLEYFFTAGP…EDGDIIFFKF (84 aa)).

It belongs to the TRAFAC class OBG-HflX-like GTPase superfamily. OBG GTPase family. YchF/OLA1 subfamily. As to quaternary structure, monomer. The cofactor is Mg(2+). Expressed in all tissues tested but its expression is more abundant in testis, liver, lung, and brain. Overexpressed in several malignancies, including cancers of the colon, rectum, ovary, lung, stomach, and uterus.

It is found in the cytoplasm. Its subcellular location is the nucleus. It localises to the nucleolus. Its function is as follows. Hydrolyzes ATP, and can also hydrolyze GTP with lower efficiency. Has lower affinity for GTP. The protein is Obg-like ATPase 1 of Homo sapiens (Human).